The sequence spans 499 residues: Maturase K (499 aa).

It belongs to the intron maturase 2 family. MatK subfamily.

It localises to the plastid. Its subcellular location is the chloroplast. In terms of biological role, usually encoded in the trnK tRNA gene intron. Probably assists in splicing its own and other chloroplast group II introns. The polypeptide is Maturase K (Batis maritima (Maritime saltwort)).